Reading from the N-terminus, the 254-residue chain is tRNA (guanine-N(1)-)-methyltransferase (254 aa).

Residues Gly-112 and 131 to 136 (IGDFIL) contribute to the S-adenosyl-L-methionine site.

The protein belongs to the RNA methyltransferase TrmD family. As to quaternary structure, homodimer.

It is found in the cytoplasm. The enzyme catalyses guanosine(37) in tRNA + S-adenosyl-L-methionine = N(1)-methylguanosine(37) in tRNA + S-adenosyl-L-homocysteine + H(+). Functionally, specifically methylates guanosine-37 in various tRNAs. The protein is tRNA (guanine-N(1)-)-methyltransferase of Persephonella marina (strain DSM 14350 / EX-H1).